A 412-amino-acid chain; its full sequence is Clamp protein VP6 (412 aa).

This sequence belongs to the reoviridae clamp protein family. As to quaternary structure, interacts with capsid proteins VP3, VP5 and VP7.

It is found in the virion. Functionally, located at the interface of the incomplete T=13 outer capsid and the pseudo T=2 inner capsid, 120 VP6 subunits clamp and stabilizes the inner capsid shell. The sequence is that of Clamp protein VP6 (S8) from Aquareovirus C (isolate Golden shiner/USA/GSRV/1977) (AQRV-C).